A 371-amino-acid polypeptide reads, in one-letter code: L-lysine 4-hydroxylase (371 aa).

Fe cation-binding residues include H174, E176, and H310.

This sequence belongs to the clavaminate synthase family. It depends on Fe(2+) as a cofactor.

It carries out the reaction L-lysine + 2-oxoglutarate + O2 = (4R)-4-hydroxy-L-lysine + succinate + CO2. In terms of biological role, alpha-ketoglutarate-dependent dioxygenase that in vitro catalyzes the regio- and stereoselective hydroxylation of L-lysine, leading to (4R)-4-hydroxy-L-lysine. This Niastella koreensis (strain DSM 17620 / KACC 11465 / NBRC 106392 / GR20-10) protein is L-lysine 4-hydroxylase.